A 96-amino-acid chain; its full sequence is Citrate lyase acyl carrier protein (96 aa).

Ser-14 is subject to O-(phosphoribosyl dephospho-coenzyme A)serine.

Belongs to the CitD family. As to quaternary structure, oligomer with a subunit composition of (alpha,beta,gamma)6.

The protein resides in the cytoplasm. Functionally, covalent carrier of the coenzyme of citrate lyase. The sequence is that of Citrate lyase acyl carrier protein from Lactococcus lactis subsp. lactis (strain IL1403) (Streptococcus lactis).